The sequence spans 129 residues: Lysozyme C-1/C-2 (129 aa).

Residues 1–129 (KVFERCELAR…VSSYVEGCTL (129 aa)) enclose the C-type lysozyme domain. Cystine bridges form between Cys-6-Cys-127, Cys-30-Cys-115, Cys-65-Cys-81, and Cys-77-Cys-95. Active-site residues include Glu-35 and Asp-53.

It belongs to the glycosyl hydrolase 22 family. In terms of assembly, monomer.

It carries out the reaction Hydrolysis of (1-&gt;4)-beta-linkages between N-acetylmuramic acid and N-acetyl-D-glucosamine residues in a peptidoglycan and between N-acetyl-D-glucosamine residues in chitodextrins.. Lysozymes have primarily a bacteriolytic function; those in tissues and body fluids are associated with the monocyte-macrophage system and enhance the activity of immunoagents. This is Lysozyme C-1/C-2 from Axis axis (Axis deer).